Here is a 1322-residue protein sequence, read N- to C-terminus: Chitin synthase chs-1 (1322 aa).

Topologically, residues Met-1 to Leu-39 are extracellular. A helical membrane pass occupies residues Phe-40 to Ile-60. Residues Met-61 to Ser-128 are Cytoplasmic-facing. The helical transmembrane segment at Val-129–Pro-149 threads the bilayer. Residues Gln-150–Cys-156 are Extracellular-facing. The helical transmembrane segment at Leu-157–Val-177 threads the bilayer. At Ser-178–Cys-193 the chain is on the cytoplasmic side. Residues Phe-194–Ala-214 form a helical membrane-spanning segment. The Extracellular portion of the chain corresponds to Leu-215 to Thr-221. The chain crosses the membrane as a helical span at residues Ala-222–Ile-242. At Asp-243–Lys-269 the chain is on the cytoplasmic side. The chain crosses the membrane as a helical span at residues Leu-270–Ile-290. The Extracellular portion of the chain corresponds to Asn-291–Arg-316. Asn-297 is a glycosylation site (N-linked (GlcNAc...) asparagine). Residues Leu-317–Phe-337 traverse the membrane as a helical segment. Topologically, residues Leu-338–Asp-342 are cytoplasmic. The chain crosses the membrane as a helical span at residues Leu-343–Val-363. Over Arg-364–Gly-396 the chain is Extracellular. A helical membrane pass occupies residues Ile-397 to Trp-417. Residues Arg-418–Gln-836 lie on the Cytoplasmic side of the membrane. Residues Leu-455–Val-486 adopt a coiled-coil conformation. A helical membrane pass occupies residues Phe-837–Ala-857. Residues Gln-858 to Arg-865 lie on the Extracellular side of the membrane. The helical transmembrane segment at Gly-866–Thr-886 threads the bilayer. Residues Thr-887 to Gln-892 are Cytoplasmic-facing. A helical transmembrane segment spans residues Leu-893–Ala-913. The Extracellular segment spans residues Thr-914 to Thr-922. A helical transmembrane segment spans residues Val-923–Cys-943. Over Leu-944–Asn-951 the chain is Cytoplasmic. The chain crosses the membrane as a helical span at residues Ile-952–Tyr-972. Over Ser-973 to Arg-1148 the chain is Extracellular. The stretch at Ile-1019–Asp-1053 forms a coiled coil. A helical membrane pass occupies residues Asn-1149–Ile-1169. At Gln-1170–Pro-1209 the chain is on the cytoplasmic side. The helical transmembrane segment at Leu-1210–Leu-1230 threads the bilayer. Topologically, residues Leu-1231–Glu-1322 are extracellular.

This sequence belongs to the chitin synthase family. Class IV subfamily.

It localises to the cell membrane. It catalyses the reaction [(1-&gt;4)-N-acetyl-beta-D-glucosaminyl](n) + UDP-N-acetyl-alpha-D-glucosamine = [(1-&gt;4)-N-acetyl-beta-D-glucosaminyl](n+1) + UDP + H(+). In terms of biological role, essential for the embryonic synthesis of chitin, a component of the eggshell. The sequence is that of Chitin synthase chs-1 from Caenorhabditis elegans.